Consider the following 489-residue polypeptide: Rhamnulokinase (489 aa).

A13–R17 serves as a coordination point for ATP. C68 and C222 are disulfide-bonded. Residues G83 and H236–T238 each bind substrate. The active-site Proton acceptor is the D237. T259 lines the ATP pocket. Position 296 (N296) interacts with substrate. An ATP-binding site is contributed by Q304. Residues C353 and C370 are joined by a disulfide bond. ATP is bound at residue G402. Residues C413 and C417 are joined by a disulfide bond.

It belongs to the rhamnulokinase family. Requires Mg(2+) as cofactor.

It catalyses the reaction L-rhamnulose + ATP = L-rhamnulose 1-phosphate + ADP + H(+). The protein operates within carbohydrate degradation; L-rhamnose degradation; glycerone phosphate from L-rhamnose: step 2/3. Involved in the catabolism of L-rhamnose (6-deoxy-L-mannose). Catalyzes the transfer of the gamma-phosphate group from ATP to the 1-hydroxyl group of L-rhamnulose to yield L-rhamnulose 1-phosphate. The protein is Rhamnulokinase of Salmonella enteritidis PT4 (strain P125109).